The sequence spans 77 residues: uncharacterized protein (77 aa).

This is an uncharacterized protein from Plasmodium falciparum (isolate fcm17 / Senegal).